The chain runs to 102 residues: Secreted RxLR effector protein 61 (102 aa).

Residues Met1–Ala22 form the signal peptide. The RxLR-dEER motif lies at Arg51 to Arg60.

Belongs to the RxLR effector family.

It localises to the secreted. The protein resides in the host chloroplast envelope. The protein localises to the host cytoplasm. Its subcellular location is the host nucleus. Its function is as follows. Effector that partially suppresses the tobacco programmed cell death induced by cell death-inducing proteins. In Plasmopara viticola (Downy mildew of grapevine), this protein is Secreted RxLR effector protein 61.